A 215-amino-acid polypeptide reads, in one-letter code: Late embryogenesis abundant protein 14 (215 aa).

2 disordered regions span residues 1–129 (MASQ…GQTG) and 190–215 (SGDNKNNAAAGKDTSTYKPGTGSDYQ). Composition is skewed to basic and acidic residues over residues 13 to 24 (GETKARAEEKTG), 32 to 41 (EKAREAKDTA), 54 to 81 (GAKEATKEKAYETKDATKEKAYEAKDAA), and 88 to 111 (AMDKGRGAAGATRDKAYDAKDRAA). The segment covering 192–215 (DNKNNAAAGKDTSTYKPGTGSDYQ) has biased composition (polar residues).

This sequence belongs to the LEA type 4 family. Expressed in the shoot apex and leaves. Expressed in dry seeds. Expressed in roots and leaves.

It localises to the nucleus. In Oryza sativa subsp. japonica (Rice), this protein is Late embryogenesis abundant protein 14.